Consider the following 170-residue polypeptide: RNA pyrophosphohydrolase (170 aa).

The region spanning 6–149 (GFRPNVGIVI…KRDVYRRALK (144 aa)) is the Nudix hydrolase domain. The Nudix box motif lies at 38–59 (GGIDDGETPEQAMYRELYEEVG).

It belongs to the Nudix hydrolase family. RppH subfamily. A divalent metal cation is required as a cofactor.

Its function is as follows. Accelerates the degradation of transcripts by removing pyrophosphate from the 5'-end of triphosphorylated RNA, leading to a more labile monophosphorylated state that can stimulate subsequent ribonuclease cleavage. The sequence is that of RNA pyrophosphohydrolase from Aliivibrio salmonicida (strain LFI1238) (Vibrio salmonicida (strain LFI1238)).